A 170-amino-acid chain; its full sequence is Cyclic pyranopterin monophosphate synthase 1 (170 aa).

Residues 79–81 (LCH) and 116–117 (ME) contribute to the substrate site. Asp-131 is an active-site residue.

It belongs to the MoaC family. Homohexamer; trimer of dimers.

It catalyses the reaction (8S)-3',8-cyclo-7,8-dihydroguanosine 5'-triphosphate = cyclic pyranopterin phosphate + diphosphate. It functions in the pathway cofactor biosynthesis; molybdopterin biosynthesis. Functionally, catalyzes the conversion of (8S)-3',8-cyclo-7,8-dihydroguanosine 5'-triphosphate to cyclic pyranopterin monophosphate (cPMP). This is Cyclic pyranopterin monophosphate synthase 1 (moaC1) from Mycobacterium bovis (strain ATCC BAA-935 / AF2122/97).